A 3027-amino-acid polypeptide reads, in one-letter code: DmX-like protein 1 (3027 aa).

3 WD repeats span residues 108 to 145, 166 to 206, and 229 to 277; these read FLES…KPTE, KTAS…RTAV, and AHPR…NDCL. Phosphoserine is present on residues serine 324, serine 422, serine 425, and serine 436. Over residues 420-433 the composition is skewed to polar residues; that stretch reads PSSEASVEDSNQAD. Residues 420-450 form a disordered region; the sequence is PSSEASVEDSNQADVKSDEETDDGVDDLKIN. The WD 4 repeat unit spans residues 476–516; that stretch reads DHQIEVLLSEWSKNADMLFSIHPMDGSLLVWHVDWLDEYQP. A disordered region spans residues 563-584; the sequence is KQKPSGLTRSTSMLISSGHNKS. Phosphoserine is present on serine 574. WD repeat units follow at residues 580-621, 628-665, and 848-895; these read GHNK…ESAF, SHKS…RTPD, and GKDS…IPVS. A phosphoserine mark is found at serine 918 and serine 924. WD repeat units lie at residues 968–1010, 1134–1175, and 1211–1251; these read PSAG…GESA, SNTK…VQDQ, and GSPP…EPVI. A phosphoserine mark is found at serine 1830, serine 1896, serine 1908, and serine 1970. Disordered regions lie at residues 2367–2412 and 2446–2468; these read PSKE…SSAP and SRAE…DDDD. A compositionally biased stretch (acidic residues) spans 2451–2468; sequence DSEESLGSDDDDNDDDDD. 6 WD repeats span residues 2742–2783, 2785–2824, 2836–2878, 2884–2923, 2926–2965, and 2978–3016; these read KAIN…TCFR, GGNS…CPVT, CHNK…ANSL, CHDS…QRQL, SHDS…LLHT, and NIGT…SPLN.

As to expression, expressed in bone, breast, eye, foreskin, heart, parathyroid, small intestine, testis, tonsils, placenta and uterus.

This is DmX-like protein 1 (DMXL1) from Homo sapiens (Human).